The following is a 173-amino-acid chain: Crossover junction endodeoxyribonuclease RuvC (173 aa).

Active-site residues include Asp8, Glu67, and Asp139. The Mg(2+) site is built by Asp8, Glu67, and Asp139.

It belongs to the RuvC family. Homodimer which binds Holliday junction (HJ) DNA. The HJ becomes 2-fold symmetrical on binding to RuvC with unstacked arms; it has a different conformation from HJ DNA in complex with RuvA. In the full resolvosome a probable DNA-RuvA(4)-RuvB(12)-RuvC(2) complex forms which resolves the HJ. Mg(2+) serves as cofactor.

The protein localises to the cytoplasm. The catalysed reaction is Endonucleolytic cleavage at a junction such as a reciprocal single-stranded crossover between two homologous DNA duplexes (Holliday junction).. In terms of biological role, the RuvA-RuvB-RuvC complex processes Holliday junction (HJ) DNA during genetic recombination and DNA repair. Endonuclease that resolves HJ intermediates. Cleaves cruciform DNA by making single-stranded nicks across the HJ at symmetrical positions within the homologous arms, yielding a 5'-phosphate and a 3'-hydroxyl group; requires a central core of homology in the junction. The consensus cleavage sequence is 5'-(A/T)TT(C/G)-3'. Cleavage occurs on the 3'-side of the TT dinucleotide at the point of strand exchange. HJ branch migration catalyzed by RuvA-RuvB allows RuvC to scan DNA until it finds its consensus sequence, where it cleaves and resolves the cruciform DNA. This chain is Crossover junction endodeoxyribonuclease RuvC, found in Citrobacter koseri (strain ATCC BAA-895 / CDC 4225-83 / SGSC4696).